Consider the following 364-residue polypeptide: Nicotinate-nucleotide--dimethylbenzimidazole phosphoribosyltransferase (364 aa).

Glu332 functions as the Proton acceptor in the catalytic mechanism.

Belongs to the CobT family.

It catalyses the reaction 5,6-dimethylbenzimidazole + nicotinate beta-D-ribonucleotide = alpha-ribazole 5'-phosphate + nicotinate + H(+). The protein operates within nucleoside biosynthesis; alpha-ribazole biosynthesis; alpha-ribazole from 5,6-dimethylbenzimidazole: step 1/2. Catalyzes the synthesis of alpha-ribazole-5'-phosphate from nicotinate mononucleotide (NAMN) and 5,6-dimethylbenzimidazole (DMB). In Salinispora tropica (strain ATCC BAA-916 / DSM 44818 / JCM 13857 / NBRC 105044 / CNB-440), this protein is Nicotinate-nucleotide--dimethylbenzimidazole phosphoribosyltransferase.